A 233-amino-acid chain; its full sequence is Purine nucleoside phosphorylase DeoD-type (233 aa).

Histidine 4 provides a ligand contact to a purine D-ribonucleoside. Phosphate contacts are provided by residues glycine 20, arginine 24, arginine 43, and 87–90 (RIGT). A purine D-ribonucleoside-binding positions include 179–181 (EME) and 203–204 (SD). Residue aspartate 204 is the Proton donor of the active site.

Belongs to the PNP/UDP phosphorylase family. In terms of assembly, homohexamer; trimer of homodimers.

The enzyme catalyses a purine D-ribonucleoside + phosphate = a purine nucleobase + alpha-D-ribose 1-phosphate. The catalysed reaction is a purine 2'-deoxy-D-ribonucleoside + phosphate = a purine nucleobase + 2-deoxy-alpha-D-ribose 1-phosphate. Catalyzes the reversible phosphorolytic breakdown of the N-glycosidic bond in the beta-(deoxy)ribonucleoside molecules, with the formation of the corresponding free purine bases and pentose-1-phosphate. This Helicobacter pylori (strain G27) protein is Purine nucleoside phosphorylase DeoD-type.